We begin with the raw amino-acid sequence, 578 residues long: Arginine--tRNA ligase (578 aa).

The 'HIGH' region signature appears at 127–137 (PNLAKEMHVGH).

It belongs to the class-I aminoacyl-tRNA synthetase family. In terms of assembly, monomer.

It localises to the cytoplasm. The enzyme catalyses tRNA(Arg) + L-arginine + ATP = L-arginyl-tRNA(Arg) + AMP + diphosphate. In Pseudomonas putida (strain GB-1), this protein is Arginine--tRNA ligase.